The chain runs to 628 residues: MGVADLIKKFESISKEEGDATVDTNSSSKPLKSNDETKELHQQESTAVPQEVDVNEEFENEPETINSSRTAEKPLETNLPKPETNEEDEEEGSMSENKIYSKGENADINVNDFQEYKEMENTGAEVLASSVEESDAIQEGVAEETEGIATPKQKENEKNDESEEESANNASEPAEEYSQSEEDADIEQSNGKETENAENASQQANDGSTSTTTSKNKKKKNKKKNKKKRNGNVNTNANVDDSTKTGENDDTTGDTTSSTTSAIQEVNDLEVVDDSCLGIDQQHNREHLKALTQDVKEETLENIAHEGRGDNTGDQNAVEKSDFEKSDTEGSRIGRDLPFEFGKRNLTEESDVWDHNAWDNVEWGEEQVQQAEEKIKEQFKHPVPEFDKKLYNENPARYWDIFYKNNKENFFKDRKWLQIEFPILYASTRKDAEPVTIFEIGCGAGNTFFPILKDNENENLRIIAADFAPRAVELVKNSEQFNPKYGHATVWDLANPDGNLPDGVEPHSVDIAVMIFVFSALAPNQWDQAMDNLHKILKPGGKIIFRDYGAYDLTQVRFKKNRILEENFYVRGDGTRVYFFSEEKLREIFTKKYFLENKIGTDRRLLVNRKRQLKMYRCWVQAVFDVPQ.

The segment covering 1 to 18 (MGVADLIKKFESISKEEG) has biased composition (basic and acidic residues). 3 disordered regions span residues 1–106 (MGVA…GENA), 124–269 (AEVL…VNDL), and 302–331 (NIAHEGRGDNTGDQNAVEKSDFEKSDTEGS). Residues 22–31 (VDTNSSSKPL) are compositionally biased toward polar residues. A compositionally biased stretch (basic and acidic residues) spans 32-42 (KSNDETKELHQ). The span at 53-62 (DVNEEFENEP) shows a compositional bias: acidic residues. Ser-93 bears the Phosphoserine mark. Residues 132–146 (EESDAIQEGVAEETE) are compositionally biased toward acidic residues. At Thr-150 the chain carries Phosphothreonine. Residues 173-186 (PAEEYSQSEEDADI) show a composition bias toward acidic residues. Residues 196 to 207 (NAENASQQANDG) show a composition bias toward polar residues. Positions 215–230 (KNKKKKNKKKNKKKRN) are enriched in basic residues. Residues 231-240 (GNVNTNANVD) show a composition bias toward polar residues. Phosphoserine occurs at positions 321 and 326. Residue Thr-347 is modified to Phosphothreonine. Positions 399, 403, 441, 466, 492, 493, and 515 each coordinate S-adenosyl-L-methionine.

The protein belongs to the methyltransferase superfamily. METL family. Interacts with SES1.

It localises to the cytoplasm. The protein resides in the cytoskeleton. It carries out the reaction cytidine(32) in tRNA(Thr) + S-adenosyl-L-methionine = N(3)-methylcytidine(32) in tRNA(Thr) + S-adenosyl-L-homocysteine + H(+). The catalysed reaction is cytidine(32) in tRNA(Ser) + S-adenosyl-L-methionine = N(3)-methylcytidine(32) in tRNA(Ser) + S-adenosyl-L-homocysteine + H(+). S-adenosyl-L-methionine-dependent methyltransferase that mediates N(3)-methylcytidine modification of residue 32 of the tRNA anticodon loop of tRNA(Thr) and tRNA(Ser). N(3)-methylcytidine methylation of tRNA(Thr) requires the N6-threonylcarbamoylation of tRNA (t6A37) by the EKC/KEOPS complex as prerequisite. N(3)-methylcytidine methylation of tRNA(Ser) requires the formation of N(6)-dimethylallyladenosine(37) (i6A37) by MOD5 as prerequisite. Methylation of tRNA(Ser) is also stimulated by SES1. Binds F-actin and shows weak F-actin cross-linking activity. The polypeptide is tRNA(Thr) (cytosine(32)-N(3))-methyltransferase (ABP140) (Saccharomyces cerevisiae (strain ATCC 204508 / S288c) (Baker's yeast)).